A 182-amino-acid chain; its full sequence is Isopentenyl-diphosphate Delta-isomerase (182 aa).

Residues histidine 25 and histidine 32 each contribute to the Mn(2+) site. In terms of domain architecture, Nudix hydrolase spans 30–164 (LLHLAFSSWL…PWAFSPWMVM (135 aa)). Residue cysteine 67 is part of the active site. Mn(2+) is bound at residue histidine 69. Glutamate 87 is a Mg(2+) binding site. Mn(2+) is bound by residues glutamate 114 and glutamate 116. The active site involves glutamate 116.

This sequence belongs to the IPP isomerase type 1 family. As to quaternary structure, homodimer. Requires Mg(2+) as cofactor. The cofactor is Mn(2+).

It localises to the cytoplasm. The catalysed reaction is isopentenyl diphosphate = dimethylallyl diphosphate. It participates in isoprenoid biosynthesis; dimethylallyl diphosphate biosynthesis; dimethylallyl diphosphate from isopentenyl diphosphate: step 1/1. Functionally, catalyzes the 1,3-allylic rearrangement of the homoallylic substrate isopentenyl (IPP) to its highly electrophilic allylic isomer, dimethylallyl diphosphate (DMAPP). The sequence is that of Isopentenyl-diphosphate Delta-isomerase from Escherichia coli (strain ATCC 8739 / DSM 1576 / NBRC 3972 / NCIMB 8545 / WDCM 00012 / Crooks).